A 976-amino-acid chain; its full sequence is LRR receptor-like serine/threonine-protein kinase ERECTA (976 aa).

An N-terminal signal peptide occupies residues 1 to 24; sequence MALFRDIVLLGFLFCLSLVATVTS. Topologically, residues 25–580 are extracellular; that stretch reads EEGATLLEIK…RRTVRVSISR (556 aa). 2 N-linked (GlcNAc...) asparagine glycosylation sites follow: asparagine 65 and asparagine 74. LRR repeat units follow at residues 69–92, 93–115, 117–140, 141–163, 165–187, 189–212, 213–235, 237–259, 260–282, 284–306, 308–330, 332–355, 356–379, 380–401, 404–425, 428–449, 452–473, 476–498, 500–522, and 523–545; these read NVVA…GDLK, SLLS…IGDC, SLQN…SKLK, QLEQ…LSQI, NLKI…IYWN, VLQY…CQLT, GLWY…IGNC, AFQV…IGFL, QVAT…IGLM, ALAV…LGNL, FTEK…LGNM, KLHY…GKLT, DLFD…SSCT, NLNS…AFQK, SMTY…ELSR, NLDT…SLGD, HLLK…DFGN, SIME…LNQL, NIIL…ANCL, and SLTV…NNFS. Residues asparagine 221 and asparagine 234 are each glycosylated (N-linked (GlcNAc...) asparagine). 2 N-linked (GlcNAc...) asparagine glycosylation sites follow: asparagine 305 and asparagine 329. An N-linked (GlcNAc...) asparagine glycan is attached at asparagine 409. The N-linked (GlcNAc...) asparagine glycan is linked to asparagine 457. N-linked (GlcNAc...) asparagine glycans are attached at residues asparagine 510, asparagine 528, and asparagine 543. A helical transmembrane segment spans residues 581-601; the sequence is AAILGIAIGGLVILLMVLIAA. The Cytoplasmic portion of the chain corresponds to 602–976; that stretch reads CRPHNPPPFL…FGQVISQNSE (375 aa). Threonine 645 carries the post-translational modification Phosphothreonine. The Protein kinase domain maps to 648-918; the sequence is LSEKYIIGHG…QVTRVLGSFM (271 aa). ATP contacts are provided by residues 654–662 and lysine 676; that span reads IGHGASSTV. Tyrosine 721 and tyrosine 760 each carry phosphotyrosine. Aspartate 773 functions as the Proton acceptor in the catalytic mechanism. Tyrosine 815 is subject to Phosphotyrosine. The residue at position 823 (threonine 823) is a Phosphothreonine.

This sequence belongs to the protein kinase superfamily. Ser/Thr protein kinase family. In terms of assembly, homodimer and heterodimer with ERL1 and TMM. Interacts with EPF1, EPF2, EPFL4, EPFL5 and EPFL6. Interacts with SERK1, SERK2, SERK3/BAK1 and SERK4 in a EPF2-induced manner. Interacts with EPFL9/STOMAGEN. In terms of tissue distribution, mostly expressed in shoot apical meristems (SAM), organ primordia, flowers, siliques and young rosette leaves, and, to a lower extent, in stems and cauline leaves. Expressed in growing inflorescence stems and pedicels. Detected in epidermis, phloem and xylem.

The protein localises to the cell membrane. It carries out the reaction L-seryl-[protein] + ATP = O-phospho-L-seryl-[protein] + ADP + H(+). It catalyses the reaction L-threonyl-[protein] + ATP = O-phospho-L-threonyl-[protein] + ADP + H(+). In terms of biological role, receptor kinase that, together with ERL1 and ERL2, regulates aerial architecture, including inflorescence (e.g. shoot apical meristem-originating organ shape, elongation of the internode and pedicels, and adaxial-abaxial polarity), and stomatal patterning (e.g. density and clustering), probably by tuning cell division and expansion. Redundantly involved with ERL1 in procambial development regulation. Forms a functional ligand-receptor pair with EPF2 (AC Q8LC53). Modulates plant transpiration efficiency by controlling stomatal density, leaf photosynthetic capacity, epidermal cell expansion, mesophyll cell proliferation and cell-cell contact. A phloem-specific expression of ER is sufficient for proper inflorescence architecture. Probable major trait regulating canalization (maintenance of phenotype despite varying environment) in many aspect of the plant physiology (e.g. plant morphology, light-dependent leaves number, branch number, flowering time, phytate and mineral concentrations) by transducing microenvironmental variation into phenotypic differentiation (ecological amplifier). May maintain development integrity in heat stress conditions. Regulates cell wall composition and structure. Confers resistance to the pathogenic bacteria Ralstonia solanacearum and to the necrotrophic fungi Plectosphaerella cucumerina and Pythium irregulare, and required for callose deposition upon infection. Resistance to P.cucumerina seems cell wall-mediated. Forms a constitutive complex with TMM involved in the recognition of the stomatal regulatory peptides EPF1, EPF2 and EPFL9/STOMAGEN. The chain is LRR receptor-like serine/threonine-protein kinase ERECTA from Arabidopsis thaliana (Mouse-ear cress).